The chain runs to 146 residues: Cell division protein SepF (146 aa).

The protein belongs to the SepF family. Homodimer. Interacts with FtsZ.

It is found in the cytoplasm. In terms of biological role, cell division protein that is part of the divisome complex and is recruited early to the Z-ring. Probably stimulates Z-ring formation, perhaps through the cross-linking of FtsZ protofilaments. Its function overlaps with FtsA. The sequence is that of Cell division protein SepF from Alkaliphilus oremlandii (strain OhILAs) (Clostridium oremlandii (strain OhILAs)).